The chain runs to 277 residues: 2-dehydro-3-deoxyphosphooctonate aldolase (277 aa).

Belongs to the KdsA family.

It is found in the cytoplasm. The catalysed reaction is D-arabinose 5-phosphate + phosphoenolpyruvate + H2O = 3-deoxy-alpha-D-manno-2-octulosonate-8-phosphate + phosphate. The protein operates within carbohydrate biosynthesis; 3-deoxy-D-manno-octulosonate biosynthesis; 3-deoxy-D-manno-octulosonate from D-ribulose 5-phosphate: step 2/3. It participates in bacterial outer membrane biogenesis; lipopolysaccharide biosynthesis. This Brucella anthropi (strain ATCC 49188 / DSM 6882 / CCUG 24695 / JCM 21032 / LMG 3331 / NBRC 15819 / NCTC 12168 / Alc 37) (Ochrobactrum anthropi) protein is 2-dehydro-3-deoxyphosphooctonate aldolase.